Consider the following 131-residue polypeptide: Large ribosomal subunit protein bL17 (131 aa).

This sequence belongs to the bacterial ribosomal protein bL17 family. Part of the 50S ribosomal subunit. Contacts protein L32.

This Burkholderia multivorans (strain ATCC 17616 / 249) protein is Large ribosomal subunit protein bL17.